A 751-amino-acid polypeptide reads, in one-letter code: Diamine oxidase [copper-containing] (751 aa).

Positions 1 to 22 (MSLAFGWAAVILLLQTADTASA) are cleaved as a signal peptide. Residues Asn-61 and Asn-110 are each glycosylated (N-linked (GlcNAc...) asparagine). Catalysis depends on Asp-373, which acts as the Proton acceptor. An intrachain disulfide couples Cys-391 to Cys-417. Tyr-461 serves as the catalytic Schiff-base intermediate with substrate; via topaquinone. Residue Tyr-461 is modified to 2',4',5'-topaquinone. Cu(2+) is bound by residues His-510 and His-512. Ca(2+) is bound by residues Asp-519, Leu-520, and Asp-521. Asn-538 carries an N-linked (GlcNAc...) asparagine glycan. Residues Glu-562, Phe-653, Asn-656, Glu-658, Asp-664, and Leu-665 each coordinate Ca(2+). His-675 serves as a coordination point for Cu(2+). Asn-745 carries N-linked (GlcNAc...) asparagine glycosylation.

This sequence belongs to the copper/topaquinone oxidase family. Homodimer; disulfide-linked. It depends on Cu(2+) as a cofactor. Requires Ca(2+) as cofactor. The cofactor is L-topaquinone. In terms of processing, topaquinone (TPQ) is generated by copper-dependent autoxidation of a specific tyrosyl residue. Post-translationally, N-glycosylated.

It is found in the secreted. It localises to the extracellular space. The protein resides in the cell membrane. It carries out the reaction histamine + O2 + H2O = imidazole-4-acetaldehyde + H2O2 + NH4(+). The catalysed reaction is N(tau)-methylhistamine + O2 + H2O = 1-methylimidazole-4-acetaldehyde + H2O2 + NH4(+). The enzyme catalyses putrescine + O2 + H2O = 4-aminobutanal + H2O2 + NH4(+). It catalyses the reaction cadaverine + O2 + H2O = 5-aminopentanal + H2O2 + NH4(+). With respect to regulation, inhibited by amiloride and amiloride analogs. Functionally, catalyzes the oxidative deamination of primary amines to the corresponding aldehydes with the concomitant production of hydrogen peroxide and ammonia. Its preferred substrates in vitro are the diamines histamine and 1-methylhistamine and it could therefore play a role in allergic and immune responses. Has a broad specificity for diamines and can also act on cadaverine and putrescine, two products of amino acid catabolism. It could also act on polyamines, like spermidine and spermine though less efficiently, and regulate various biological processes. The chain is Diamine oxidase [copper-containing] from Mus musculus (Mouse).